Consider the following 462-residue polypeptide: Chitinase-like mite allergen Der f 18.0101 (462 aa).

An N-terminal signal peptide occupies residues 1-25 (MTRFSLTVLAVLAACFGSNIRPNVA). The GH18 domain maps to 29–378 (PKTVCYYESW…HAIQSNYYHG (350 aa)). Residues C33 and C58 are joined by a disulfide bond. The N-linked (GlcNAc...) asparagine glycan is linked to N338. A Chitin-binding type-2 domain is found at 404 to 462 (VFHCHEEGFFRDKTYCATYYECKKGDFGLEKTVHHCANHLQAFDEVSRTCIDHTKIPGC). C439 and C453 form a disulfide bridge.

Belongs to the glycosyl hydrolase 18 family. Chitinase class II subfamily. In terms of tissue distribution, expressed in the upper digestive tract. Staining is observed in the ventriculus, and in very rare individuals, also in the intestine or esophagus. No expression in fecal pellets neither inside the rectum nor defecated outside of the body.

It localises to the secreted. In terms of biological role, probably a non-catalytic chitinase-like protein, which binds to insoluble chitin and enhances the activity of the catalytic chitinases. Has weak chitin-binding activity. The chain is Chitinase-like mite allergen Der f 18.0101 from Dermatophagoides farinae (American house dust mite).